Here is a 576-residue protein sequence, read N- to C-terminus: Proline--tRNA ligase (576 aa).

This sequence belongs to the class-II aminoacyl-tRNA synthetase family. ProS type 1 subfamily. In terms of assembly, homodimer.

The protein localises to the cytoplasm. It catalyses the reaction tRNA(Pro) + L-proline + ATP = L-prolyl-tRNA(Pro) + AMP + diphosphate. In terms of biological role, catalyzes the attachment of proline to tRNA(Pro) in a two-step reaction: proline is first activated by ATP to form Pro-AMP and then transferred to the acceptor end of tRNA(Pro). As ProRS can inadvertently accommodate and process non-cognate amino acids such as alanine and cysteine, to avoid such errors it has two additional distinct editing activities against alanine. One activity is designated as 'pretransfer' editing and involves the tRNA(Pro)-independent hydrolysis of activated Ala-AMP. The other activity is designated 'posttransfer' editing and involves deacylation of mischarged Ala-tRNA(Pro). The misacylated Cys-tRNA(Pro) is not edited by ProRS. The polypeptide is Proline--tRNA ligase (Pelobacter propionicus (strain DSM 2379 / NBRC 103807 / OttBd1)).